The sequence spans 380 residues: uncharacterized protein (380 aa).

Residues 251-275 (NMSERPPTPSHDTASSSTSTDPNPL) are disordered. The span at 260 to 272 (SHDTASSSTSTDP) shows a compositional bias: low complexity.

This is an uncharacterized protein from Allium cepa var. aggregatum (Shallot).